We begin with the raw amino-acid sequence, 310 residues long: Malate dehydrogenase (310 aa).

Residues 7–12 (GAGNVG) and Asp-32 each bind NAD(+). Arg-81 and Arg-87 together coordinate substrate. NAD(+) contacts are provided by residues Asn-94 and 117-119 (VSN). 2 residues coordinate substrate: Asn-119 and Arg-150. His-174 serves as the catalytic Proton acceptor.

Belongs to the LDH/MDH superfamily. MDH type 3 family.

The catalysed reaction is (S)-malate + NAD(+) = oxaloacetate + NADH + H(+). Catalyzes the reversible oxidation of malate to oxaloacetate. This Chloroherpeton thalassium (strain ATCC 35110 / GB-78) protein is Malate dehydrogenase.